The primary structure comprises 119 residues: Protein TusC (119 aa).

Belongs to the DsrF/TusC family. As to quaternary structure, heterohexamer, formed by a dimer of trimers. The hexameric TusBCD complex contains 2 copies each of TusB, TusC and TusD. The TusBCD complex interacts with TusE.

The protein localises to the cytoplasm. Its function is as follows. Part of a sulfur-relay system required for 2-thiolation of 5-methylaminomethyl-2-thiouridine (mnm(5)s(2)U) at tRNA wobble positions. The polypeptide is Protein TusC (Buchnera aphidicola subsp. Acyrthosiphon pisum (strain APS) (Acyrthosiphon pisum symbiotic bacterium)).